Reading from the N-terminus, the 216-residue chain is Pyrophosphatase PpaX (216 aa).

Asp-9 functions as the Nucleophile in the catalytic mechanism.

This sequence belongs to the HAD-like hydrolase superfamily. PpaX family. Requires Mg(2+) as cofactor.

It catalyses the reaction diphosphate + H2O = 2 phosphate + H(+). Functionally, hydrolyzes pyrophosphate formed during P-Ser-HPr dephosphorylation by HPrK/P. Might play a role in controlling the intracellular pyrophosphate pool. In Bacillus anthracis (strain A0248), this protein is Pyrophosphatase PpaX.